The sequence spans 60 residues: Large ribosomal subunit protein uL30 (60 aa).

It belongs to the universal ribosomal protein uL30 family. Part of the 50S ribosomal subunit.

In Pseudoalteromonas translucida (strain TAC 125), this protein is Large ribosomal subunit protein uL30.